A 110-amino-acid polypeptide reads, in one-letter code: Late cornified envelope protein 2C (110 aa).

Positions 1 to 10 (MSCQQNQQQC) are enriched in low complexity. Residues 1 to 23 (MSCQQNQQQCQPPPKCPPKCTPK) form a disordered region. Residues 11–23 (QPPPKCPPKCTPK) are compositionally biased toward pro residues.

It belongs to the LCE family. In terms of assembly, interacts with CYSRT1; the interaction is direct. As to expression, skin-specific. Expression was readily detected in adult trunk skin, adult arm skin, fetal skin, penal skin, vulva, esophagus and tongue. Not expressed in the cervix, rectum, lung, colon, or placenta.

Its function is as follows. Precursors of the cornified envelope of the stratum. The sequence is that of Late cornified envelope protein 2C (LCE2C) from Homo sapiens (Human).